A 211-amino-acid polypeptide reads, in one-letter code: Large ribosomal subunit protein uL4 (211 aa).

The disordered stretch occupies residues 42 to 73 (NNRQGTHSTKDRSEVRGGGIKPWAQKGTGRAR).

Belongs to the universal ribosomal protein uL4 family. In terms of assembly, part of the 50S ribosomal subunit.

In terms of biological role, one of the primary rRNA binding proteins, this protein initially binds near the 5'-end of the 23S rRNA. It is important during the early stages of 50S assembly. It makes multiple contacts with different domains of the 23S rRNA in the assembled 50S subunit and ribosome. Forms part of the polypeptide exit tunnel. This chain is Large ribosomal subunit protein uL4, found in Leptospira biflexa serovar Patoc (strain Patoc 1 / Ames).